Reading from the N-terminus, the 452-residue chain is Phosphoglucosamine mutase (452 aa).

The active-site Phosphoserine intermediate is Ser-98. Residues Ser-98, Asp-239, Asp-241, and Asp-243 each contribute to the Mg(2+) site. Ser-98 is subject to Phosphoserine.

Belongs to the phosphohexose mutase family. Mg(2+) is required as a cofactor. Activated by phosphorylation.

The catalysed reaction is alpha-D-glucosamine 1-phosphate = D-glucosamine 6-phosphate. Its function is as follows. Catalyzes the conversion of glucosamine-6-phosphate to glucosamine-1-phosphate. This Anaplasma marginale (strain St. Maries) protein is Phosphoglucosamine mutase.